The sequence spans 1809 residues: Pyochelin synthetase PchF (1809 aa).

The tract at residues 69 to 490 (FPLTPVQAAY…GLLRRLAQSP (422 aa)) is condensation/cyclization. An adenylation region spans residues 520 to 915 (FAERALLTPD…GREDDQVKIR (396 aa)). The region spanning 1407-1488 (APADELESAL…GLAERLRSAP (82 aa)) is the Carrier domain. The residue at position 1442 (Ser1442) is an O-(pantetheine 4'-phosphoryl)serine. A thioesterase region spans residues 1584 to 1797 (LGRRYAEALH…FDCLGEALAQ (214 aa)).

This sequence belongs to the NRP synthetase family. It depends on pantetheine 4'-phosphate as a cofactor.

The catalysed reaction is holo-[peptidyl-carrier protein] + L-cysteine + ATP = L-cysteinyl-[peptidyl-carrier protein] + AMP + diphosphate. Its pathway is siderophore biosynthesis. Involved in the biosynthesis of the siderophore pyochelin. Adenylates L-cysteine and loads it onto its peptidyl carrier domain via a thioester linkage to the phosphopanthetheine moiety. Then forms a peptide bond between the salicyl-thiazolinyl intermediate bound to the second carrier domain of PchE and the cysteine bound to its own peptidyl carrier domain to form the salicyl-thiazolinyl-cysteinyl-S-PCP2 intermediate. It subsequently cyclizes the C-terminal cysteine to form the second thiazoline heterocycle in the salicyl-thiazolinyl-thiazolinyl-S-PCP2 intermediate. When this intermediate is released by the action of a thioesterase, it produces the tricyclic acid hydroxyphenyl-thiazolyl-thiazolinyl-carboxylic acid (HPTT-COOH), an advanced intermediate containing the aryl-4,2-bis-heterocyclic skeleton of the bithiazoline class of siderophores. The protein is Pyochelin synthetase PchF of Pseudomonas aeruginosa (strain UCBPP-PA14).